The primary structure comprises 367 residues: MDKEYVGFAALPNQLHRKSVKKGFDFTLMVAGESGLGKSTLINSLFLTNLYEDRQIPEASARLTQTLTIERRGVEIEEGGIKVKLTVVDTPGFGDSVDCSDCWLPVVRFIEEQFEQYLRDESGLNRKNIQDSRVHCCLYFISPFGRGLRPLDVAFLRAVHEKVNIIPVIGKADALMPKETQALKQKIREQLKEEEINIYQFPECDSDEDEDFKRQDAEMKESIPFAVVGSCEVVRDGGPRPVRGRHYSWGTVEVENPHHCDFLNLRRMLVQTHLQDLKEVTHDLLYEGYRARCLQSLARPGARDRASRSKLSRQSATEIPLPMLPLADTEKLIREKDEELRRMQEMLEKMQAQMQLSQAQGEQSDAL.

A Septin-type G domain is found at 22–296 (KGFDFTLMVA…EGYRARCLQS (275 aa)). The segment at 32 to 39 (GESGLGKS) is G1 motif. Residues 32–39 (GESGLGKS), T66, G92, and 171–179 (KADALMPKE) contribute to the GTP site. Residues 89–92 (DTPG) are G3 motif. The tract at residues 170-173 (GKAD) is G4 motif. S206 carries the post-translational modification Phosphoserine. GTP is bound by residues G229 and R245. Phosphoserine; by AURKB is present on S248. T251 carries the post-translational modification Phosphothreonine. A phosphoserine; by AURKB mark is found at S307 and S315.

Belongs to the TRAFAC class TrmE-Era-EngA-EngB-Septin-like GTPase superfamily. Septin GTPase family. Septins polymerize into heterooligomeric protein complexes that form filaments, and can associate with cellular membranes, actin filaments and microtubules. GTPase activity is required for filament formation. Interacts with AURKB.

It is found in the cytoplasm. The protein localises to the cytoskeleton. The protein resides in the microtubule organizing center. Its subcellular location is the centrosome. It localises to the midbody. In terms of biological role, filament-forming cytoskeletal GTPase. May play a role in cytokinesis (Potential). The sequence is that of Septin-1 from Bos taurus (Bovine).